We begin with the raw amino-acid sequence, 468 residues long: N-acyl-phosphatidylethanolamine-hydrolyzing phospholipase D, mitochondrial (468 aa).

A mitochondrion-targeting transit peptide spans 1–39; that stretch reads MNFVTCHVQMRLLLQRRLVRLRESELFRPQTSLSTFKRH. The chain crosses the membrane as a helical span at residues 54 to 76; sequence YARILLLSVLVPYTGYAFYVSLA. Zn(2+) is bound by residues His265, His267, Asp269, His270, His332, and His425.

This sequence belongs to the NAPE-PLD family. Zn(2+) is required as a cofactor.

Its subcellular location is the mitochondrion membrane. The enzyme catalyses an N-acyl-1,2-diacyl-sn-glycero-3-phosphoethanolamine + H2O = an N-acylethanolamine + a 1,2-diacyl-sn-glycero-3-phosphate + H(+). In terms of biological role, hydrolyzes N-acyl-phosphatidylethanolamines (NAPEs) to produce N-acylethanolamines (NAEs). The protein is N-acyl-phosphatidylethanolamine-hydrolyzing phospholipase D, mitochondrial (FMP30) of Saccharomyces cerevisiae (strain ATCC 204508 / S288c) (Baker's yeast).